We begin with the raw amino-acid sequence, 450 residues long: TATA box-binding protein-associated factor RNA polymerase I subunit A (450 aa).

As to quaternary structure, component of the transcription factor SL1/TIF-IB complex, composed of TBP and at least TAF1A, TAF1B, TAF1C and TAF1D. In the complex interacts directly with TBP, TAF1A and TAF1B. Interaction of the SL1/TIF-IB subunits with TBP excludes interaction of TBP with the transcription factor IID (TFIID) subunits. Interacts with UBFT. Interacts with CEBPA (isoform 1 and isoform 4). Part of Pol I pre-initiation complex (PIC), in which Pol I core assembles with RRN3 and promoter-bound UTBF and SL1/TIF-IB complex.

The protein resides in the nucleus. The protein localises to the nucleolus. Its function is as follows. Component of the transcription factor SL1/TIF-IB complex, which is involved in the assembly of the PIC (pre-initiation complex) during RNA polymerase I-dependent transcription. The rate of PIC formation probably is primarily dependent on the rate of association of SL1/TIF-IB with the rDNA promoter. SL1/TIF-IB is involved in stabilization of nucleolar transcription factor 1/UBTF on rDNA. Formation of SL1/TIF-IB excludes the association of TBP with TFIID subunits. The polypeptide is TATA box-binding protein-associated factor RNA polymerase I subunit A (TAF1A) (Homo sapiens (Human)).